Reading from the N-terminus, the 373-residue chain is D-alanine--D-alanine ligase (373 aa).

The 208-residue stretch at 156–363 folds into the ATP-grasp domain; sequence KKLWSAAGLP…YPTLLATMVE (208 aa). Residue 184-239 coordinates ATP; that stretch reads LQRLGLPAYVKPARGGSSIGVSRVSSFDELPAAIAAARRHDPKVIVEAAINGRELE. 3 residues coordinate Mg(2+): Asp318, Glu330, and Asn332.

The protein belongs to the D-alanine--D-alanine ligase family. Mg(2+) serves as cofactor. Mn(2+) is required as a cofactor.

Its subcellular location is the cytoplasm. It carries out the reaction 2 D-alanine + ATP = D-alanyl-D-alanine + ADP + phosphate + H(+). It participates in cell wall biogenesis; peptidoglycan biosynthesis. Its function is as follows. Cell wall formation. The polypeptide is D-alanine--D-alanine ligase (Mycobacterium ulcerans (strain Agy99)).